The following is a 310-amino-acid chain: Iron ABC transporter substrate-binding lipoprotein MtsA (310 aa).

An N-terminal signal peptide occupies residues 1–20; that stretch reads MGKKMSLILGAFLSVFLLVA. C21 carries the N-palmitoyl cysteine lipid modification. A lipid anchor (S-diacylglycerol cysteine) is attached at C21. Fe(2+) contacts are provided by H68, H140, E206, and D281.

The protein belongs to the bacterial solute-binding protein 9 family. Lipoprotein receptor antigen (Lrai) subfamily.

The protein resides in the cell membrane. Functionally, part of the ATP-binding cassette (ABC) transport system MtsABC involved in iron import. Binds iron with high affinity and specificity and delivers it to the membrane permease for translocation into the cytoplasm. Has low affinity for Zn(2+) and Cu(2+). The protein is Iron ABC transporter substrate-binding lipoprotein MtsA (mtsA) of Streptococcus pyogenes serotype M6 (strain ATCC BAA-946 / MGAS10394).